A 197-amino-acid chain; its full sequence is Putative NADH dehydrogenase/NAD(P)H nitroreductase Plav_3612 (197 aa).

The protein belongs to the nitroreductase family. HadB/RutE subfamily. Requires FMN as cofactor.

This is Putative NADH dehydrogenase/NAD(P)H nitroreductase Plav_3612 from Parvibaculum lavamentivorans (strain DS-1 / DSM 13023 / NCIMB 13966).